A 315-amino-acid polypeptide reads, in one-letter code: tRNA pseudouridine synthase B (315 aa).

The active-site Nucleophile is the aspartate 54.

The protein belongs to the pseudouridine synthase TruB family. Type 1 subfamily.

It carries out the reaction uridine(55) in tRNA = pseudouridine(55) in tRNA. In terms of biological role, responsible for synthesis of pseudouridine from uracil-55 in the psi GC loop of transfer RNAs. This is tRNA pseudouridine synthase B from Agrobacterium fabrum (strain C58 / ATCC 33970) (Agrobacterium tumefaciens (strain C58)).